We begin with the raw amino-acid sequence, 874 residues long: Leucine--tRNA ligase (874 aa).

The short motif at 47-57 is the 'HIGH' region element; that stretch reads PYPSGKLHMGH. The short motif at 636-640 is the 'KMSKS' region element; it reads KMSKS. Position 639 (K639) interacts with ATP.

This sequence belongs to the class-I aminoacyl-tRNA synthetase family.

The protein localises to the cytoplasm. It carries out the reaction tRNA(Leu) + L-leucine + ATP = L-leucyl-tRNA(Leu) + AMP + diphosphate. The polypeptide is Leucine--tRNA ligase (Acinetobacter baumannii (strain AB307-0294)).